We begin with the raw amino-acid sequence, 727 residues long: Translation initiation factor IF-2, mitochondrial (727 aa).

The N-terminal 29 residues, 1-29, are a transit peptide targeting the mitochondrion; it reads MNQKLLKLENLLRFHTICRQVHSPSQRRL. Positions 178-346 constitute a tr-type G domain; that stretch reads PRSPVVTVMG…ATIALAEILE (169 aa). A G1 region spans residues 187–194; it reads GHVDHGKT. 187–194 contacts GTP; sequence GHVDHGKT. The tract at residues 212-216 is G2; the sequence is GITQH. Residues 234-237 and 288-291 contribute to the GTP site; these read DTPG and NKCD. The segment at 234–237 is G3; sequence DTPG. The tract at residues 288–291 is G4; that stretch reads NKCD. Residues 324-326 are G5; it reads SAL. A Phosphothreonine modification is found at threonine 688.

The protein belongs to the TRAFAC class translation factor GTPase superfamily. Classic translation factor GTPase family. IF-2 subfamily. Monomer.

The protein localises to the mitochondrion. Functionally, one of the essential components for the initiation of protein synthesis. Protects formylmethionyl-tRNA from spontaneous hydrolysis and promotes its binding to the 30S ribosomal subunits. Also involved in the hydrolysis of GTP during the formation of the 70S ribosomal complex. This chain is Translation initiation factor IF-2, mitochondrial (Mtif2), found in Mus musculus (Mouse).